The primary structure comprises 275 residues: Hydroxyethylthiazole kinase (275 aa).

Met-50 is a substrate binding site. Arg-126 and Ser-171 together coordinate ATP. Ala-200 serves as a coordination point for substrate.

It belongs to the Thz kinase family. It depends on Mg(2+) as a cofactor.

It carries out the reaction 5-(2-hydroxyethyl)-4-methylthiazole + ATP = 4-methyl-5-(2-phosphooxyethyl)-thiazole + ADP + H(+). Its pathway is cofactor biosynthesis; thiamine diphosphate biosynthesis; 4-methyl-5-(2-phosphoethyl)-thiazole from 5-(2-hydroxyethyl)-4-methylthiazole: step 1/1. Catalyzes the phosphorylation of the hydroxyl group of 4-methyl-5-beta-hydroxyethylthiazole (THZ). The chain is Hydroxyethylthiazole kinase from Acinetobacter baumannii (strain AB307-0294).